The sequence spans 298 residues: Cytosolic Fe-S cluster assembly factor CFD1 (298 aa).

Residue 25 to 32 participates in ATP binding; the sequence is GKGGVGKS. [4Fe-4S] cluster is bound by residues cysteine 215 and cysteine 218.

Belongs to the Mrp/NBP35 ATP-binding proteins family. NUBP2/CFD1 subfamily. In terms of assembly, heterotetramer of 2 NBP35 and 2 CFD1 chains. Requires [4Fe-4S] cluster as cofactor.

Its subcellular location is the cytoplasm. Its function is as follows. Component of the cytosolic iron-sulfur (Fe/S) protein assembly (CIA) machinery. Required for maturation of extramitochondrial Fe-S proteins. The NBP35-CFD1 heterotetramer forms a Fe-S scaffold complex, mediating the de novo assembly of an Fe-S cluster and its transfer to target apoproteins. Required for biogenesis and export of both ribosomal subunits, which may reflect a role in assembly of the Fe/S clusters in RLI1, a protein which performs rRNA processing and ribosome export. This Debaryomyces hansenii (strain ATCC 36239 / CBS 767 / BCRC 21394 / JCM 1990 / NBRC 0083 / IGC 2968) (Yeast) protein is Cytosolic Fe-S cluster assembly factor CFD1.